Consider the following 335-residue polypeptide: Nod factor export ATP-binding protein I (335 aa).

In terms of domain architecture, ABC transporter spans 37 to 267 (IDVASVTKSY…KIGCQVIEIY (231 aa)). ATP is bound at residue 69–76 (GPNGAGKS).

Belongs to the ABC transporter superfamily. Lipooligosaccharide exporter (TC 3.A.1.102) family. In terms of assembly, the complex is composed of two ATP-binding proteins (NodI) and two transmembrane proteins (NodJ).

The protein localises to the cell inner membrane. Functionally, part of the ABC transporter complex NodIJ involved in the export of the nodulation factors (Nod factors), the bacterial signal molecules that induce symbiosis and subsequent nodulation induction. Nod factors are LCO (lipo-chitin oligosaccharide), a modified beta-1,4-linked N-acetylglucosamine oligosaccharide. This subunit is responsible for energy coupling to the transport system. The sequence is that of Nod factor export ATP-binding protein I from Rhizobium meliloti (strain 1021) (Ensifer meliloti).